The sequence spans 133 residues: S-adenosylmethionine decarboxylase proenzyme (133 aa).

Residue Ser65 is the Schiff-base intermediate with substrate; via pyruvic acid of the active site. The residue at position 65 (Ser65) is a Pyruvic acid (Ser); by autocatalysis. The active-site Proton acceptor; for processing activity is His70. Cys85 acts as the Proton donor; for catalytic activity in catalysis.

It belongs to the prokaryotic AdoMetDC family. Type 1 subfamily. In terms of assembly, heterotetramer of two alpha and two beta chains arranged as a dimer of alpha/beta heterodimers. Pyruvate serves as cofactor. Post-translationally, is synthesized initially as an inactive proenzyme. Formation of the active enzyme involves a self-maturation process in which the active site pyruvoyl group is generated from an internal serine residue via an autocatalytic post-translational modification. Two non-identical subunits are generated from the proenzyme in this reaction, and the pyruvate is formed at the N-terminus of the alpha chain, which is derived from the carboxyl end of the proenzyme. The post-translation cleavage follows an unusual pathway, termed non-hydrolytic serinolysis, in which the side chain hydroxyl group of the serine supplies its oxygen atom to form the C-terminus of the beta chain, while the remainder of the serine residue undergoes an oxidative deamination to produce ammonia and the pyruvoyl group blocking the N-terminus of the alpha chain.

The catalysed reaction is S-adenosyl-L-methionine + H(+) = S-adenosyl 3-(methylsulfanyl)propylamine + CO2. It functions in the pathway amine and polyamine biosynthesis; S-adenosylmethioninamine biosynthesis; S-adenosylmethioninamine from S-adenosyl-L-methionine: step 1/1. In terms of biological role, catalyzes the decarboxylation of S-adenosylmethionine to S-adenosylmethioninamine (dcAdoMet), the propylamine donor required for the synthesis of the polyamines spermine and spermidine from the diamine putrescine. In Brevibacillus brevis (strain 47 / JCM 6285 / NBRC 100599), this protein is S-adenosylmethionine decarboxylase proenzyme.